Consider the following 703-residue polypeptide: Probable ATP-dependent RNA helicase vasa-like (703 aa).

Disordered stretches follow at residues 1 to 22, 35 to 73, and 88 to 167; these read MSDD…ESFG, NTGN…GRGG, and RDCP…RGCF. Residues 61-73 show a composition bias toward gly residues; it reads SGGGGFGGRGRGG. The CCHC-type 1 zinc finger occupies 77 to 92; it reads CFKCGDEGHMARDCPS. Positions 146–155 are enriched in gly residues; that stretch reads FGFGSGSGSR. CCHC-type zinc fingers lie at residues 166 to 181 and 189 to 204; these read CFKC…DCPS and CFKC…DCPN. Positions 261-289 match the Q motif motif; the sequence is ESFQSMNLRPLLLENIVKAGYGCPTPVQK. A Helicase ATP-binding domain is found at 292–475; it reads IPNVMNGRDI…SAFLNNYLFV (184 aa). 305–312 lines the ATP pocket; sequence AQTGSGKT. The DEAD box motif lies at 419–422; the sequence is DEAD. The Helicase C-terminal domain occupies 506–651; it reads MCEEILISAD…TIPDWLTQKA (146 aa). Residues 676 to 703 form a disordered region; that stretch reads GGGRGWEKNQASSFLGGPSESNVDEEWD.

This sequence belongs to the DEAD box helicase family. DDX4/VASA subfamily. As to expression, expressed in ovaries and testis. Not expressed in somatic tissue of the ovaries including follicle cells, muscle and connective tissue.

Its subcellular location is the cytoplasm. The protein localises to the nucleus. It is found in the nucleolus. It carries out the reaction ATP + H2O = ADP + phosphate + H(+). Its function is as follows. Involved in translational control mechanisms operating in early stages of oogenesis. Required maternally in many stages of oogenesis, including cystocyte differentiation, oocyte differentiation, and specification of anterior-posterior polarity in the developing cysts. Essential for the formation and/or structural integrity of perinuclear nuage particles during germ cell formation. This Penaeus vannamei (Whiteleg shrimp) protein is Probable ATP-dependent RNA helicase vasa-like.